The primary structure comprises 463 residues: ATP synthase subunit beta (463 aa).

Residue 152 to 159 (GGAGVGKT) coordinates ATP.

This sequence belongs to the ATPase alpha/beta chains family. In terms of assembly, F-type ATPases have 2 components, CF(1) - the catalytic core - and CF(0) - the membrane proton channel. CF(1) has five subunits: alpha(3), beta(3), gamma(1), delta(1), epsilon(1). CF(0) has three main subunits: a(1), b(2) and c(9-12). The alpha and beta chains form an alternating ring which encloses part of the gamma chain. CF(1) is attached to CF(0) by a central stalk formed by the gamma and epsilon chains, while a peripheral stalk is formed by the delta and b chains.

It is found in the cell inner membrane. It carries out the reaction ATP + H2O + 4 H(+)(in) = ADP + phosphate + 5 H(+)(out). In terms of biological role, produces ATP from ADP in the presence of a proton gradient across the membrane. The catalytic sites are hosted primarily by the beta subunits. This is ATP synthase subunit beta from Shewanella oneidensis (strain ATCC 700550 / JCM 31522 / CIP 106686 / LMG 19005 / NCIMB 14063 / MR-1).